A 370-amino-acid polypeptide reads, in one-letter code: A-type ATP synthase subunit C (370 aa).

It belongs to the V-ATPase V0D/AC39 subunit family. In terms of assembly, has multiple subunits with at least A(3), B(3), C, D, E, F, H, I and proteolipid K(x).

It localises to the cell membrane. Its function is as follows. Component of the A-type ATP synthase that produces ATP from ADP in the presence of a proton gradient across the membrane. In Pyrococcus abyssi (strain GE5 / Orsay), this protein is A-type ATP synthase subunit C.